A 51-amino-acid polypeptide reads, in one-letter code: Large ribosomal subunit protein bL32c (51 aa).

The protein belongs to the bacterial ribosomal protein bL32 family.

The protein localises to the plastid. It is found in the chloroplast. The sequence is that of Large ribosomal subunit protein bL32c from Oenothera elata subsp. hookeri (Hooker's evening primrose).